The sequence spans 219 residues: Probable GTP-binding protein EngB (219 aa).

Positions 31 to 205 (VGVEIAFAGR…LSILNEWCHP (175 aa)) constitute an EngB-type G domain. GTP is bound by residues 39 to 46 (GRSNAGKS), 66 to 70 (GRTQL), 84 to 87 (DLPG), 151 to 154 (TKSD), and 184 to 186 (FSA). 2 residues coordinate Mg(2+): S46 and T68.

The protein belongs to the TRAFAC class TrmE-Era-EngA-EngB-Septin-like GTPase superfamily. EngB GTPase family. Mg(2+) is required as a cofactor.

In terms of biological role, necessary for normal cell division and for the maintenance of normal septation. This is Probable GTP-binding protein EngB from Shewanella sp. (strain ANA-3).